Here is a 155-residue protein sequence, read N- to C-terminus: Basic phospholipase A2 PC9 (155 aa).

The first 21 residues, 1–21, serve as a signal peptide directing secretion; that stretch reads MYPAHLLVLLAVCVSLLGASA. A propeptide spanning residues 22-27 is cleaved from the precursor; that stretch reads ISPRPL. Disulfide bonds link Cys-38-Cys-98, Cys-54-Cys-144, Cys-56-Cys-72, Cys-71-Cys-125, Cys-78-Cys-118, Cys-87-Cys-111, and Cys-105-Cys-116. Positions 55, 57, and 59 each coordinate Ca(2+). His-75 is a catalytic residue. Asp-76 provides a ligand contact to Ca(2+). Residue Asp-119 is part of the active site.

The protein belongs to the phospholipase A2 family. Group I subfamily. D49 sub-subfamily. Ca(2+) serves as cofactor. As to expression, expressed by the venom gland.

The protein localises to the secreted. It carries out the reaction a 1,2-diacyl-sn-glycero-3-phosphocholine + H2O = a 1-acyl-sn-glycero-3-phosphocholine + a fatty acid + H(+). Snake venom phospholipase A2 (PLA2) that inhibits neuromuscular transmission by blocking acetylcholine release from the nerve termini. PLA2 catalyzes the calcium-dependent hydrolysis of the 2-acyl groups in 3-sn-phosphoglycerides. The sequence is that of Basic phospholipase A2 PC9 from Laticauda colubrina (Yellow-lipped sea krait).